The primary structure comprises 211 residues: Ribosomal RNA small subunit methyltransferase G (211 aa).

S-adenosyl-L-methionine is bound by residues glycine 76, leucine 81, 127–128 (VE), and arginine 142.

The protein belongs to the methyltransferase superfamily. RNA methyltransferase RsmG family.

It is found in the cytoplasm. It catalyses the reaction guanosine(527) in 16S rRNA + S-adenosyl-L-methionine = N(7)-methylguanosine(527) in 16S rRNA + S-adenosyl-L-homocysteine. In terms of biological role, specifically methylates the N7 position of guanine in position 527 of 16S rRNA. This Vibrio vulnificus (strain CMCP6) protein is Ribosomal RNA small subunit methyltransferase G.